We begin with the raw amino-acid sequence, 668 residues long: Spartin (668 aa).

The residue at position 1 (M1) is an N-acetylmethionine. The MIT domain occupies 16-94 (IKEAYKKAFV…LQNVRTRLEI (79 aa)). The interval 110 to 176 (VPKLYPEFPP…PSEAPPAYTP (67 aa)) is disordered. Residues 118–127 (PPKDMSEKSP) show a composition bias toward basic and acidic residues. At S126 the chain carries Phosphoserine. Low complexity predominate over residues 128 to 162 (EPQSLSSLPQHSEVNGSTSTASAESSSTPTTLSLP). The tract at residues 190-380 (ESGEFSSVGE…QLDPSSKDVR (191 aa)) is ubiquitin-binding region (UBR) domain. The LC3-interacting region (LIR); mediates interaction with MAP1LC3A AND MAP1LC3C signature appears at 193–200 (EFSSVGEN). The interval 348–396 (FQIPGISGSASDQLKEASGTDVRQLDPSSKDVRQKGKRGKKTKGTSSEE) is disordered. A Glycyl lysine isopeptide (Lys-Gly) (interchain with G-Cter in ubiquitin) cross-link involves residue K362. The 185-residue stretch at 427 to 611 (ILSGASWVSW…YNIDNIGIKA (185 aa)) folds into the Senescence domain. Residues 431 to 503 (ASWVSWGLVK…LVDGVCTVAN (73 aa)) are required for localization to lipid droplets. S470 bears the Phosphoserine mark. Residues 631-668 (IDNSKGENPGGGASANLKGEKDEQKEGPEKNGAKKKDK) are disordered. Over residues 648–668 (KGEKDEQKEGPEKNGAKKKDK) the composition is skewed to basic and acidic residues.

As to quaternary structure, interacts with ITCH and WWP1. Interacts (via MIT domain) with IST1; leading to the recruitment of SPART to midbodies. Interacts with MAP1LC3A and MAP1LC3C. Ubiquitinated; ubiquitination does not require ITCH and WWP1.

The protein localises to the cytoplasm. It is found in the midbody. The protein resides in the lipid droplet. Its function is as follows. Lipophagy receptor that plays an important role in lipid droplet (LD) turnover in motor neurons. Localizes to LDs and interacts with components of the autophagy machinery, such as MAP1LC3A/C proteins to deliver LDs to autophagosomes for degradation via lipophagy. Lipid transfer protein required for lipid droplet degradation, including by lipophagy. Can bind and transfer all lipid species found in lipid droplets, from phospholipids to triglycerides and sterol esters but the direction of lipid transfer by spartin and its cargos are unknown. May be implicated in endosomal trafficking, or microtubule dynamics, or both. Participates in cytokinesis. This is Spartin from Bos taurus (Bovine).